The primary structure comprises 695 residues: Hypersensitivity response secretion protein HrpI (695 aa).

Helical transmembrane passes span 21–38 (LVGA…ITPL), 45–61 (VLIA…IMLA), 68–92 (LAFS…VSTT), 111–135 (FVVG…FLVI), 203–223 (AIAS…IGVL), 244–262 (GLIA…GMII), and 311–327 (VFIT…LLQL).

It belongs to the FHIPEP (flagella/HR/invasion proteins export pore) family.

The protein localises to the cell inner membrane. In terms of biological role, involved in the secretion of harpin-pss; a proteinaceous elicitor of the hypersensitivity response in plants. This Pseudomonas syringae pv. syringae protein is Hypersensitivity response secretion protein HrpI (hrpI).